A 336-amino-acid polypeptide reads, in one-letter code: Glyceraldehyde-3-phosphate dehydrogenase 1 (336 aa).

NAD(+) is bound by residues 12–13 (RI), D34, and R79. D-glyceraldehyde 3-phosphate contacts are provided by residues 149–151 (SCT), T180, 209–210 (TG), and R232. C150 serves as the catalytic Nucleophile. N314 lines the NAD(+) pocket.

The protein belongs to the glyceraldehyde-3-phosphate dehydrogenase family. As to quaternary structure, homotetramer.

The protein localises to the cytoplasm. The catalysed reaction is D-glyceraldehyde 3-phosphate + phosphate + NAD(+) = (2R)-3-phospho-glyceroyl phosphate + NADH + H(+). It functions in the pathway carbohydrate degradation; glycolysis; pyruvate from D-glyceraldehyde 3-phosphate: step 1/5. Its activity is regulated as follows. Inhibited by koningic acid through the interaction of cysteine residues with koningic acid even at very low concentrations. This chain is Glyceraldehyde-3-phosphate dehydrogenase 1 (gpd1), found in Trichoderma koningii (Hypocrea koningii).